Here is an 842-residue protein sequence, read N- to C-terminus: Probable cleavage and polyadenylation specificity factor subunit 2 (842 aa).

A compositionally biased stretch (basic and acidic residues) spans 414–425 (AEETRIRMERAR). Disordered regions lie at residues 414-442 (AEETRIRMERARRQAQANESDDSDDDDIA) and 708-747 (METFQDDQNKQEASEENVAEGEKSNGQSKENDENASSIPI). The segment covering 432–441 (ESDDSDDDDI) has biased composition (acidic residues). The span at 731-747 (SNGQSKENDENASSIPI) shows a compositional bias: polar residues.

Belongs to the metallo-beta-lactamase superfamily. RNA-metabolizing metallo-beta-lactamase-like family. CPSF2/YSH1 subfamily. CPSF is a heterotetramer composed of four distinct subunits 160, 100, 70 and 30 kDa.

The protein localises to the nucleus. In terms of biological role, CPSF plays a key role in pre-mRNA 3'-end formation, recognizing the AAUAAA signal sequence and interacting with poly(A)polymerase and other factors to bring about cleavage and poly(A) addition. This Caenorhabditis briggsae protein is Probable cleavage and polyadenylation specificity factor subunit 2.